Consider the following 401-residue polypeptide: NADH-quinone oxidoreductase subunit D 2 (401 aa).

Belongs to the complex I 49 kDa subunit family. As to quaternary structure, NDH-1 is composed of 14 different subunits. Subunits NuoB, C, D, E, F, and G constitute the peripheral sector of the complex.

Its subcellular location is the cell inner membrane. It carries out the reaction a quinone + NADH + 5 H(+)(in) = a quinol + NAD(+) + 4 H(+)(out). NDH-1 shuttles electrons from NADH, via FMN and iron-sulfur (Fe-S) centers, to quinones in the respiratory chain. The immediate electron acceptor for the enzyme in this species is believed to be ubiquinone. Couples the redox reaction to proton translocation (for every two electrons transferred, four hydrogen ions are translocated across the cytoplasmic membrane), and thus conserves the redox energy in a proton gradient. The protein is NADH-quinone oxidoreductase subunit D 2 of Thermodesulfovibrio yellowstonii (strain ATCC 51303 / DSM 11347 / YP87).